Reading from the N-terminus, the 253-residue chain is MICOS complex subunit mic25-b (253 aa).

Gly2 is lipidated: N-myristoyl glycine. The interval 38–82 is disordered; the sequence is KDQSTWAASGAASGSATVPSKVGSSASHPAAASKDGAHKPTAAGV. Residues 44-53 show a composition bias toward low complexity; sequence AASGAASGSA. A coiled-coil region spans residues 87–116; that stretch reads AEEDLYRRYEREQTLIQEELARLAKREKDA. Residues 206–248 form the CHCH domain; it reads DPVCMDLQSNILKCYAENKQERLNCSDLAKEYQKCVSAAQKNL. 2 consecutive short sequence motifs (cx9C motif) follow at residues 209-219 and 230-240; these read CMDLQSNILKC and CSDLAKEYQKC. 2 cysteine pairs are disulfide-bonded: Cys209-Cys240 and Cys219-Cys230.

It belongs to the MICOS complex subunit Mic19 family. Metazoan Mic25 subfamily. As to quaternary structure, component of the mitochondrial contact site and cristae organizing system (MICOS) complex (also known as MINOS or MitOS complex).

The protein resides in the mitochondrion inner membrane. Functionally, component of the MICOS complex, a large protein complex of the mitochondrial inner membrane that plays crucial roles in the maintenance of crista junctions, inner membrane architecture, and formation of contact sites to the outer membrane. The protein is MICOS complex subunit mic25-b (chchd6-b) of Xenopus laevis (African clawed frog).